The following is a 934-amino-acid chain: Protein translocase subunit SecA (934 aa).

Residues Gln-90, 108 to 112, and Asp-509 contribute to the ATP site; that span reads GEGKT. The interval 535 to 565 is disordered; sequence PEEDHTPPVPLQRSAPGGFSDAAAPSLPRSG.

The protein belongs to the SecA family. Monomer and homodimer. Part of the essential Sec protein translocation apparatus which comprises SecA, SecYEG and auxiliary proteins SecDF. Other proteins may also be involved.

It is found in the cell inner membrane. It localises to the cellular thylakoid membrane. The protein resides in the cytoplasm. It carries out the reaction ATP + H2O + cellular proteinSide 1 = ADP + phosphate + cellular proteinSide 2.. Its function is as follows. Part of the Sec protein translocase complex. Interacts with the SecYEG preprotein conducting channel. Has a central role in coupling the hydrolysis of ATP to the transfer of proteins into and across the cell membrane, serving as an ATP-driven molecular motor driving the stepwise translocation of polypeptide chains across the membrane. Functionally, probably participates in protein translocation into and across both the cytoplasmic and thylakoid membranes in cyanobacterial cells. This chain is Protein translocase subunit SecA, found in Synechococcus sp. (strain CC9605).